The sequence spans 658 residues: Glycine--tRNA ligase beta subunit (658 aa).

It belongs to the class-II aminoacyl-tRNA synthetase family. Tetramer of two alpha and two beta subunits.

It is found in the cytoplasm. The enzyme catalyses tRNA(Gly) + glycine + ATP = glycyl-tRNA(Gly) + AMP + diphosphate. This Rickettsia bellii (strain OSU 85-389) protein is Glycine--tRNA ligase beta subunit.